We begin with the raw amino-acid sequence, 60 residues long: UPF0434 protein Mfla_2088 (60 aa).

The protein belongs to the UPF0434 family.

This Methylobacillus flagellatus (strain ATCC 51484 / DSM 6875 / VKM B-1610 / KT) protein is UPF0434 protein Mfla_2088.